The chain runs to 115 residues: Large ribosomal subunit protein bL20 (115 aa).

The protein belongs to the bacterial ribosomal protein bL20 family.

In terms of biological role, binds directly to 23S ribosomal RNA and is necessary for the in vitro assembly process of the 50S ribosomal subunit. It is not involved in the protein synthesizing functions of that subunit. This Chlorobium luteolum (strain DSM 273 / BCRC 81028 / 2530) (Pelodictyon luteolum) protein is Large ribosomal subunit protein bL20.